Here is an 877-residue protein sequence, read N- to C-terminus: Leucine--tRNA ligase (877 aa).

A 'HIGH' region motif is present at residues 48 to 58 (PYPSGKLHMGH). The 'KMSKS' region motif lies at 636–640 (KMSKS). Lysine 639 contacts ATP.

It belongs to the class-I aminoacyl-tRNA synthetase family.

Its subcellular location is the cytoplasm. The catalysed reaction is tRNA(Leu) + L-leucine + ATP = L-leucyl-tRNA(Leu) + AMP + diphosphate. The sequence is that of Leucine--tRNA ligase from Ralstonia pickettii (strain 12J).